A 352-amino-acid chain; its full sequence is tRNA N6-adenosine threonylcarbamoyltransferase (352 aa).

His-117 and His-121 together coordinate Fe cation. Substrate contacts are provided by residues 140-144 (LVSGG), Asp-173, Gly-186, and Asn-287. Fe cation is bound at residue Asp-315.

The protein belongs to the KAE1 / TsaD family. Fe(2+) serves as cofactor.

Its subcellular location is the cytoplasm. The enzyme catalyses L-threonylcarbamoyladenylate + adenosine(37) in tRNA = N(6)-L-threonylcarbamoyladenosine(37) in tRNA + AMP + H(+). Functionally, required for the formation of a threonylcarbamoyl group on adenosine at position 37 (t(6)A37) in tRNAs that read codons beginning with adenine. Is involved in the transfer of the threonylcarbamoyl moiety of threonylcarbamoyl-AMP (TC-AMP) to the N6 group of A37, together with TsaE and TsaB. TsaD likely plays a direct catalytic role in this reaction. This Psychrobacter cryohalolentis (strain ATCC BAA-1226 / DSM 17306 / VKM B-2378 / K5) protein is tRNA N6-adenosine threonylcarbamoyltransferase.